A 236-amino-acid polypeptide reads, in one-letter code: Kinetochore protein Spc25 (236 aa).

Residues 44 to 106 adopt a coiled-coil conformation; that stretch reads KNIISAKEAI…DMEAQLLRHT (63 aa). A disordered region spans residues 194–217; the sequence is EVAGASPVTPSGSERPKATSKHSN.

It belongs to the SPC25 family. In terms of assembly, component of the Ndc80 complex, which is composed of Ndc80, Nuf2 and Spc25.

The protein resides in the nucleus. It localises to the chromosome. It is found in the centromere. The protein localises to the kinetochore. In terms of biological role, acts as a component of the essential kinetochore-associated Ndc80 complex, which is required for chromosome segregation and spindle checkpoint activity during meiosis and mitosis. Required for kinetochore integrity and the organization of stable microtubule binding sites in the outer plate of the kinetochore. Participates in SAC signaling that responds specifically to disruptions in spindle microtubule dynamics. The NDC80 complex synergistically enhances the affinity of the SKA1 complex for microtubules and may allow the NDC80 complex to track depolymerizing microtubules. The polypeptide is Kinetochore protein Spc25 (Drosophila persimilis (Fruit fly)).